The primary structure comprises 160 residues: Small ribosomal subunit protein uS9 (160 aa).

It belongs to the universal ribosomal protein uS9 family.

In Cereibacter sphaeroides (strain ATCC 17029 / ATH 2.4.9) (Rhodobacter sphaeroides), this protein is Small ribosomal subunit protein uS9.